A 504-amino-acid polypeptide reads, in one-letter code: Sphingosine-1-phosphate transporter SPNS2 (504 aa).

Transmembrane regions (helical) follow at residues 48–70 (LLRCRTPLVAAGILSFGNVLNYM), 94–114 (GLLQTVFICSFMVAAPIFGYL), 122–142 (IILSCGIFFWSAVTLLSSFIT), 182–202 (VMLSVFYLAIPLGSGLGYILG), 214–234 (WALRVSPMLGLTAGTLILIFV), 269–289 (VFSSLASAAVSFATGAFGIWI), 317–337 (LIFGAITCVTGLLGVVIGAVT), 351–371 (LVCAVSMLGSAIFICLIFVVA), 375–395 (IVGAYICIFIGETLLFLNWAI), 415–435 (FQGFTSHLLGDAGSPYLIGLI), and 460–480 (LCPFVIVLGGMFFLATALFFL).

The protein belongs to the major facilitator superfamily. Spinster (TC 2.A.1.49) family.

It localises to the cell membrane. It is found in the endosome membrane. It carries out the reaction sphing-4-enine 1-phosphate(in) = sphing-4-enine 1-phosphate(out). The catalysed reaction is sphinganine 1-phosphate(in) = sphinganine 1-phosphate(out). In terms of biological role, lipid transporter that specifically mediates export of sphingosine-1-phosphate (sphing-4-enine 1-phosphate, S1P) and sphinganine-1-phosphate, which play critical roles in regulating heart development. Mediates the export of S1P from cells in the extraembryonic yolk syncytial layer (YSL), thereby regulating myocardial precursor migration. In Danio rerio (Zebrafish), this protein is Sphingosine-1-phosphate transporter SPNS2.